A 284-amino-acid chain; its full sequence is Probable endonuclease 4 (284 aa).

Zn(2+)-binding residues include H69, H109, E145, D179, H182, H216, D229, H231, and E261.

This sequence belongs to the AP endonuclease 2 family. Zn(2+) is required as a cofactor.

The catalysed reaction is Endonucleolytic cleavage to 5'-phosphooligonucleotide end-products.. Endonuclease IV plays a role in DNA repair. It cleaves phosphodiester bonds at apurinic or apyrimidinic (AP) sites, generating a 3'-hydroxyl group and a 5'-terminal sugar phosphate. The chain is Probable endonuclease 4 from Klebsiella pneumoniae (strain 342).